We begin with the raw amino-acid sequence, 27 residues long: Truncated HBeAg protein (27 aa).

The sequence is that of Truncated HBeAg protein (C) from Hepatitis B virus genotype C subtype ayw (isolate Australia/AustRC/1992) (HBV-C).